The sequence spans 337 residues: Glyceraldehyde-3-phosphate dehydrogenase (337 aa).

Residues 12–13, Asp34, and Lys79 contribute to the NAD(+) site; that span reads RI. D-glyceraldehyde 3-phosphate-binding positions include 150–152, Thr181, 210–211, and Arg233; these read SCT and TG. The Nucleophile role is filled by Cys151. NAD(+) is bound at residue Asn315.

This sequence belongs to the glyceraldehyde-3-phosphate dehydrogenase family. Homotetramer.

It localises to the cytoplasm. It catalyses the reaction D-glyceraldehyde 3-phosphate + phosphate + NAD(+) = (2R)-3-phospho-glyceroyl phosphate + NADH + H(+). It participates in carbohydrate degradation; glycolysis; pyruvate from D-glyceraldehyde 3-phosphate: step 1/5. The chain is Glyceraldehyde-3-phosphate dehydrogenase (GPD) from Schizophyllum commune (Split gill fungus).